A 397-amino-acid chain; its full sequence is Phosphoglycerate kinase (397 aa).

Residues Asp22 to Asn24, Arg38, His61 to Arg64, Arg119, and Arg152 contribute to the substrate site. Residues Lys203, Gly294, Glu325, and Gly351 to Thr354 contribute to the ATP site.

This sequence belongs to the phosphoglycerate kinase family. As to quaternary structure, monomer.

It is found in the cytoplasm. The catalysed reaction is (2R)-3-phosphoglycerate + ATP = (2R)-3-phospho-glyceroyl phosphate + ADP. The protein operates within carbohydrate degradation; glycolysis; pyruvate from D-glyceraldehyde 3-phosphate: step 2/5. The protein is Phosphoglycerate kinase (pgk) of Aquifex aeolicus (strain VF5).